We begin with the raw amino-acid sequence, 255 residues long: MFKIGNLELQSRLLLGTGKFENEDVQTEAIKASETNVLTFAVRRMNLYDKNLPNPLANINLKDFITFPNTASAKTAEEAIRIAEIAKHAGVCDMIKVEVIGDDETLLPDPFETYEACKVLLERGYIVCPYISNDVVLAKRLEDLGVHAVMPLASPIGTGRGINNQLNLSYIIKNSNVPVIVDAGIGSPKDACHAMELGADGILLNTAVSGAKDPVKMAEAMKLGIHAGRLSYEAGRIPVKYTAQASSPTEGLGFL.

The active-site Schiff-base intermediate with DXP is Lys96. Residues Gly157, 183-184, and 205-206 contribute to the 1-deoxy-D-xylulose 5-phosphate site; these read AG and NT.

It belongs to the ThiG family. As to quaternary structure, homotetramer. Forms heterodimers with either ThiH or ThiS.

Its subcellular location is the cytoplasm. The enzyme catalyses [ThiS sulfur-carrier protein]-C-terminal-Gly-aminoethanethioate + 2-iminoacetate + 1-deoxy-D-xylulose 5-phosphate = [ThiS sulfur-carrier protein]-C-terminal Gly-Gly + 2-[(2R,5Z)-2-carboxy-4-methylthiazol-5(2H)-ylidene]ethyl phosphate + 2 H2O + H(+). The protein operates within cofactor biosynthesis; thiamine diphosphate biosynthesis. Catalyzes the rearrangement of 1-deoxy-D-xylulose 5-phosphate (DXP) to produce the thiazole phosphate moiety of thiamine. Sulfur is provided by the thiocarboxylate moiety of the carrier protein ThiS. In vitro, sulfur can be provided by H(2)S. This chain is Thiazole synthase, found in Staphylococcus haemolyticus (strain JCSC1435).